Here is a 166-residue protein sequence, read N- to C-terminus: Heme-degrading monooxygenase HmoB (166 aa).

A Fe cation-binding site is contributed by asparagine 33. An ABM domain is found at phenylalanine 66 to phenylalanine 153. Histidine 138 contacts heme.

The protein belongs to the antibiotic biosynthesis monooxygenase family. Homodimer.

The protein resides in the cytoplasm. The catalysed reaction is heme b + 3 reduced [NADPH--hemoprotein reductase] + 3 O2 = biliverdin IXalpha + CO + Fe(2+) + 3 oxidized [NADPH--hemoprotein reductase] + 3 H2O + H(+). Functionally, catalyzes the oxidative degradation of the heme macrocyclic porphyrin ring in the presence of a suitable electron donor such as ascorbate or NADPH--cytochrome P450 reductase, with subsequent release of free iron. In Bacillus subtilis (strain 168), this protein is Heme-degrading monooxygenase HmoB (hmoB).